A 524-amino-acid chain; its full sequence is Cytochrome P450 4F1 (524 aa).

A helical membrane pass occupies residues 15-35 (VAFPWQTLLLFGASWILAQIL). Heme-binding residues include glutamate 328 and cysteine 468.

It belongs to the cytochrome P450 family. Heme is required as a cofactor. Expressed in liver.

The protein resides in the endoplasmic reticulum membrane. Its subcellular location is the microsome membrane. The enzyme catalyses (5Z,8Z,11Z,14Z)-eicosatetraenoate + reduced [NADPH--hemoprotein reductase] + O2 = 20-hydroxy-(5Z,8Z,11Z,14Z)-eicosatetraenoate + oxidized [NADPH--hemoprotein reductase] + H2O + H(+). It catalyses the reaction 5-hydroxy-(6E,8Z,11Z,14Z)-eicosatetraenoate + reduced [NADPH--hemoprotein reductase] + O2 = 5,20-dihydroxy-(6E,8Z,11Z,14Z)-eicosatetraenoate + oxidized [NADPH--hemoprotein reductase] + H2O + H(+). It carries out the reaction 8-hydroxy-(5Z,9E,11Z,14Z)-eicosatetraenoate + reduced [NADPH--hemoprotein reductase] + O2 = 8,20-dihydroxy-(5Z,9E,11Z,14Z)-eicosatetraenoate + oxidized [NADPH--hemoprotein reductase] + H2O + H(+). The catalysed reaction is leukotriene B4 + reduced [NADPH--hemoprotein reductase] + O2 = 20-hydroxy-leukotriene B4 + oxidized [NADPH--hemoprotein reductase] + H2O + H(+). The enzyme catalyses 6-trans-leukotriene B4 + reduced [NADPH--hemoprotein reductase] + O2 = 20-hydroxy-6-trans-leukotriene B4 + oxidized [NADPH--hemoprotein reductase] + H2O + H(+). It catalyses the reaction lipoxin A4 + reduced [NADPH--hemoprotein reductase] + O2 = 20-hydroxy-lipoxin A4 + oxidized [NADPH--hemoprotein reductase] + H2O + H(+). In terms of biological role, a cytochrome P450 monooxygenase involved in the metabolism of arachidonic acid and its oxygenated derivatives. Mechanistically, uses molecular oxygen inserting one oxygen atom into a substrate, and reducing the second into a water molecule, with two electrons provided by NADPH via cytochrome P450 reductase (CPR; NADPH-ferrihemoprotein reductase). Participates in the conversion of arachidonic acid to omega-hydroxyeicosatetraenoic acid (20-HETE), a signaling molecule acting both as vasoconstrictive and natriuretic with overall effect on arterial blood pressure. May play a role in the oxidative inactivation of eicosanoids, including both pro-inflammatory and anti-inflammatory mediators such as leukotriene B4 (LTB4), lipoxin A4 (LXA4), and several HETEs. This Rattus norvegicus (Rat) protein is Cytochrome P450 4F1.